A 452-amino-acid polypeptide reads, in one-letter code: RNA polymerase II-associated protein rba50 (452 aa).

3 disordered regions span residues 60–83 (LRKNKESPGLEGKGNLDDQGIDEE), 125–202 (EREL…QTKR), and 223–261 (PIKGNEEDDASEDAKHSPKKHSPALSDGTTSNDGAPLEF). Residues 125 to 135 (ERELAQRKDRS) show a composition bias toward basic and acidic residues. A compositionally biased stretch (polar residues) spans 136 to 154 (SQVNTPDLSQRPSDDSFLS). A compositionally biased stretch (basic and acidic residues) spans 156 to 165 (EKLRSSEKLN). The span at 170–191 (SVLSSEAVDSSSGSPSPPMALS) shows a compositional bias: low complexity.

The protein belongs to the RPAP1 family. Interacts with RNA polymerase II.

The protein resides in the cytoplasm. It is found in the nucleus. Functionally, forms an interface between the RNA polymerase II enzyme and chaperone/scaffolding proteins, suggesting that it is required to connect RNA polymerase II to regulators of protein complex formation. The sequence is that of RNA polymerase II-associated protein rba50 (rba50) from Schizosaccharomyces pombe (strain 972 / ATCC 24843) (Fission yeast).